A 234-amino-acid chain; its full sequence is Ribosomal RNA large subunit methyltransferase E (234 aa).

Residues 1–37 form a disordered region; it reads MSDDDRRRWKGPGPERQDSGRRSTERKVIARNARTES. 5 residues coordinate S-adenosyl-L-methionine: glycine 91, tryptophan 93, aspartate 109, aspartate 125, and aspartate 149. Lysine 189 (proton acceptor) is an active-site residue.

The protein belongs to the class I-like SAM-binding methyltransferase superfamily. RNA methyltransferase RlmE family.

Its subcellular location is the cytoplasm. The enzyme catalyses uridine(2552) in 23S rRNA + S-adenosyl-L-methionine = 2'-O-methyluridine(2552) in 23S rRNA + S-adenosyl-L-homocysteine + H(+). Its function is as follows. Specifically methylates the uridine in position 2552 of 23S rRNA at the 2'-O position of the ribose in the fully assembled 50S ribosomal subunit. This Hyphomonas neptunium (strain ATCC 15444) protein is Ribosomal RNA large subunit methyltransferase E.